The chain runs to 499 residues: Isoflavone 2'-hydroxylase (499 aa).

Residue Cys-436 participates in heme binding.

The protein belongs to the cytochrome P450 family. Heme is required as a cofactor.

Its subcellular location is the membrane. The enzyme catalyses a 2'-unsubstituted isoflavone + reduced [NADPH--hemoprotein reductase] + O2 = a 2'-hydroxyisoflavone + oxidized [NADPH--hemoprotein reductase] + H2O + H(+). Functionally, catalyzes the hydroxylation of isoflavones, daidzein and formononetin, to yield 2'-hydroxyisoflavones, 2'-hydroxydaidzein, and 2'-hydroxyformononetin, respectively. The polypeptide is Isoflavone 2'-hydroxylase (CYP81E1) (Glycyrrhiza echinata (Licorice)).